Consider the following 471-residue polypeptide: MAGEDHQWQGSILYNMLMSAKQTHATREAPEARLRGSCWGCSCGSEPPVGREGQPGGPAVALLYRCCFCGEDHPRQGSILYNMLTSAKQTQETPEAPEARLGGACWGCSCGSEPRVGREELPGGRATVLLYRCCFCGEEHPRQGSILYSLLTSAKQTHVALEAPEARPGGAWWDRSYCAQRLGAREELPGGRPVTLPYRCCFCGEDHPRQSGILCNMPMSAKQTHVAPEAQPGAPWWDPSCAAQRVALKSPQVVCEAASAGLLKTLRFVKYLPCFQVLPLDQQLVLVRSCWAPLLMLELAQDRLNFETVETLEPSLLQMILTTRRQETEGDEPPSPQPPVQPHLVLPSEAEHLPSVAEVQAIKGFLAKCWSLDISTKEYAYLKGTVLFNPDLPGLQCVKYIQGLQWGTQQILSEHIRMTHRGYQARFAELNSALFLLRFINANVLAELFFRPIIGTVSMDDMMLEMLCAKL.

A run of 3 repeats spans residues 1 to 67 (MAGE…YRCC), 68 to 134 (FCGE…YRCC), and 135 to 201 (FCGE…YRCC). Positions 1 to 253 (MAGEDHQWQG…QRVALKSPQV (253 aa)) are 4 X 67 AA tandem repeats. 3 short sequence motifs (LXXLL motif) span residues 13-17 (LYNML), 80-84 (LYNML), and 147-151 (LYSLL). Residues 202-253 (FCGEDHPRQSGILCNMPMSAKQTHVAPEAQPGAPWWDPSCAAQRVALKSPQV) form a 4; truncated repeat. In terms of domain architecture, NR LBD spans 210–470 (QSGILCNMPM…DMMLEMLCAK (261 aa)). Positions 462 to 467 (MMLEML) match the AF-2 motif motif.

It belongs to the nuclear hormone receptor family. NR0 subfamily. Homodimer. Interacts with NR5A1, NR5A2, NR0B2 and with COPS2. Interacts with ESRRB; represses ESRRB activity at the GATA6 promoter.

It is found in the nucleus. The protein localises to the cytoplasm. Functionally, nuclear receptor that lacks a DNA-binding domain and acts as a corepressor that inhibits the transcriptional activity of other nuclear receptors through heterodimeric interactions. Component of a cascade required for the development of the hypothalamic-pituitary-adrenal-gonadal axis. May also have a role in the development of the embryo and in the maintenance of embryonic stem cell pluripotency. The sequence is that of Nuclear receptor subfamily 0 group B member 1 (NR0B1) from Sus scrofa (Pig).